Reading from the N-terminus, the 3174-residue chain is Intermembrane lipid transfer protein VPS13A (3174 aa).

The Chorein N-terminal domain maps to 3 to 116; that stretch reads FESVVVDVLN…LMEAKQQELK (114 aa). 3 TPR repeats span residues 212 to 245, 373 to 406, and 537 to 575; these read LFAY…ENIV, LTSK…QTAE, and IDSF…NPLD. Position 839 is a phosphoserine (serine 839). The FFAT signature appears at 842-848; sequence EFFDAPC. TPR repeat units follow at residues 1256–1289 and 1291–1320; these read VIDL…LLPL and LEVV…KPME. Residue serine 1416 is modified to Phosphoserine. The TPR 6 repeat unit spans residues 2009–2041; the sequence is YEGDTLLGTASPENEFNIPLGSYRSFIFLKPED. The SHR-BD domain occupies 2209-2454; that stretch reads VAFHSPYWMV…VFYTWADPVG (246 aa). TPR repeat units lie at residues 2568 to 2601, 2717 to 2751, and 2860 to 2898; these read PMSV…DTNV, LGFI…FKEE, and ILGL…PEEF. Positions 2751–3174 are required for mitochondrial localization; the sequence is EYKTASLVDQ…QEAREPSPSL (424 aa). The interval 2953-3027 is required for lipid droplet localization; the sequence is PAGFREGITR…SSTFQGIKRA (75 aa). One copy of the TPR 10 repeat lies at 3086 to 3119; sequence MLMITRRGVLFVTKGTFGQLTCEWQYSFDEFTKE.

Belongs to the VPS13 family. In terms of assembly, interacts (via FFAT motif) with VAPA and VAPB. Interacts with RAB7A. Interacts with XK. Expressed in red blood cells (at protein level). Widely expressed, with high expression in brain, heart, skeletal muscle and kidney.

The protein resides in the mitochondrion outer membrane. It is found in the endoplasmic reticulum membrane. It localises to the endosome membrane. The protein localises to the lysosome membrane. Its subcellular location is the lipid droplet. The protein resides in the golgi apparatus. It is found in the cytoplasmic vesicle. It localises to the secretory vesicle. The protein localises to the neuronal dense core vesicle. In terms of biological role, mediates the transfer of lipids between membranes at organelle contact sites. Binds phospholipids. Required for the formation or stabilization of ER-mitochondria contact sites which enable transfer of lipids between the ER and mitochondria. Negatively regulates lipid droplet size and motility. Required for efficient lysosomal protein degradation. In Homo sapiens (Human), this protein is Intermembrane lipid transfer protein VPS13A (VPS13A).